Here is a 229-residue protein sequence, read N- to C-terminus: Clathrin light chain (229 aa).

2 disordered regions span residues 1 to 24 and 76 to 132; these read MSQF…DSKN and EMQA…KLRE. Over residues 107 to 132 the composition is skewed to basic and acidic residues; sequence EPVRKWKEDQMKRIQERDESSKKLRE. The residue at position 229 (Ser229) is a Phosphoserine.

Belongs to the clathrin light chain family. Clathrin coats are formed from molecules containing 3 heavy chains and 3 light chains.

The protein resides in the cytoplasmic vesicle membrane. It localises to the membrane. It is found in the coated pit. Functionally, clathrin is the major protein of the polyhedral coat of coated pits and vesicles. In Schizosaccharomyces pombe (strain 972 / ATCC 24843) (Fission yeast), this protein is Clathrin light chain (clc1).